We begin with the raw amino-acid sequence, 274 residues long: Protein CURLY FLAG LEAF 1 (274 aa).

Residues Ser-17–Glu-44 are disordered. The short motif at Thr-47–Ser-52 is the EAR element. The region spanning Val-54–Ser-88 is the WW domain. 2 disordered regions span residues Thr-83–Thr-133 and Gly-175–Asp-216. Composition is skewed to low complexity over residues Arg-87–Arg-106, Ala-121–Thr-133, and Ser-184–Ser-207.

As to quaternary structure, binds to HDG1.

Functionally, negatively regulates the cuticle development probably by interacting with the HD-ZIP IV transcription factor HDG1. This chain is Protein CURLY FLAG LEAF 1, found in Oryza sativa subsp. japonica (Rice).